The chain runs to 63 residues: Large ribosomal subunit protein bL32 (63 aa).

Positions 1–27 are disordered; it reads MANPKAKMSKSRRDKRRAQFNARTKPA. Residues 7 to 18 show a composition bias toward basic residues; sequence KMSKSRRDKRRA.

Belongs to the bacterial ribosomal protein bL32 family.

The protein is Large ribosomal subunit protein bL32 of Pelodictyon phaeoclathratiforme (strain DSM 5477 / BU-1).